The primary structure comprises 420 residues: Tyrosine--tRNA ligase (420 aa).

Y36 provides a ligand contact to L-tyrosine. Residues 41-50 (PTADSLHIGH) carry the 'HIGH' region motif. Residues Y170 and Q174 each coordinate L-tyrosine. The 'KMSKS' region signature appears at 231–235 (KFGKS). ATP is bound at residue K234. Residues 353–420 (TNIVEVLIET…KKKYFMVNYQ (68 aa)) form the S4 RNA-binding domain.

It belongs to the class-I aminoacyl-tRNA synthetase family. TyrS type 1 subfamily. Homodimer.

It localises to the cytoplasm. It catalyses the reaction tRNA(Tyr) + L-tyrosine + ATP = L-tyrosyl-tRNA(Tyr) + AMP + diphosphate + H(+). Functionally, catalyzes the attachment of tyrosine to tRNA(Tyr) in a two-step reaction: tyrosine is first activated by ATP to form Tyr-AMP and then transferred to the acceptor end of tRNA(Tyr). In Staphylococcus aureus (strain COL), this protein is Tyrosine--tRNA ligase.